We begin with the raw amino-acid sequence, 299 residues long: GTPase Era (299 aa).

Positions 5 to 175 constitute an Era-type G domain; sequence RSGFVCLVGR…IDVLAAALPP (171 aa). Positions 13–20 are G1; sequence GRPNTGKS. 13–20 contacts GTP; it reads GRPNTGKS. The G2 stretch occupies residues 39 to 43; it reads QTTRH. Positions 60–63 are G3; the sequence is DTPG. GTP contacts are provided by residues 60–64 and 124–127; these read DTPGL and TKID. The interval 124 to 127 is G4; the sequence is TKID. Residues 154-156 are G5; it reads VSA. In terms of domain architecture, KH type-2 spans 206-285; it reads VRDELPHSLA…YLDLRVKVAK (80 aa).

It belongs to the TRAFAC class TrmE-Era-EngA-EngB-Septin-like GTPase superfamily. Era GTPase family. As to quaternary structure, monomer.

The protein localises to the cell envelope. It is found in the secreted. Its subcellular location is the cell wall. Functionally, exhibits GTPase activity. Binds RNA but is probably not involved in ribosome assembly in mycobacteria. This chain is GTPase Era, found in Mycolicibacterium paratuberculosis (strain ATCC BAA-968 / K-10) (Mycobacterium paratuberculosis).